We begin with the raw amino-acid sequence, 299 residues long: 4-diphosphocytidyl-2-C-methyl-D-erythritol kinase (299 aa).

Lys16 is a catalytic residue. Residue 101–111 (PVAAGIGGGSA) coordinates ATP. The active site involves Asp143.

Belongs to the GHMP kinase family. IspE subfamily.

The catalysed reaction is 4-CDP-2-C-methyl-D-erythritol + ATP = 4-CDP-2-C-methyl-D-erythritol 2-phosphate + ADP + H(+). The protein operates within isoprenoid biosynthesis; isopentenyl diphosphate biosynthesis via DXP pathway; isopentenyl diphosphate from 1-deoxy-D-xylulose 5-phosphate: step 3/6. Catalyzes the phosphorylation of the position 2 hydroxy group of 4-diphosphocytidyl-2C-methyl-D-erythritol. This Rhodopseudomonas palustris (strain ATCC BAA-98 / CGA009) protein is 4-diphosphocytidyl-2-C-methyl-D-erythritol kinase.